The chain runs to 131 residues: Small ribosomal subunit protein uS8 (131 aa).

Belongs to the universal ribosomal protein uS8 family. Part of the 30S ribosomal subunit. Contacts proteins S5 and S12.

Its function is as follows. One of the primary rRNA binding proteins, it binds directly to 16S rRNA central domain where it helps coordinate assembly of the platform of the 30S subunit. The polypeptide is Small ribosomal subunit protein uS8 (Shewanella amazonensis (strain ATCC BAA-1098 / SB2B)).